Consider the following 564-residue polypeptide: Copine-8 (564 aa).

C2 domains lie at 1 to 133 and 142 to 265; these read MDSR…RLEK and KCGT…FNVY. Ca(2+) is bound by residues aspartate 39, aspartate 45, aspartate 99, aspartate 101, serine 104, lysine 109, aspartate 111, aspartate 173, aspartate 179, aspartate 235, aspartate 237, and aspartate 243. Position 260 is a phosphoserine (serine 260). Positions 309-510 constitute a VWFA domain; it reads NFTVAIDFTA…VQFVPFRDYI (202 aa).

The protein belongs to the copine family. It depends on Ca(2+) as a cofactor.

Its function is as follows. Probable calcium-dependent phospholipid-binding protein that may play a role in calcium-mediated intracellular processes. This Homo sapiens (Human) protein is Copine-8.